The primary structure comprises 201 residues: Riboflavin synthase (201 aa).

Lumazine-binding repeat units lie at residues 1–97 (MFTG…LGGH) and 98–197 (IVQG…ERLM). Residues 4–6 (GIV), 47–49 (CLT), 62–67 (DVMAET), 101–103 (GHV), K136, 145–147 (SLT), and 162–167 (SLIPTT) contribute to the 2,4-dihydroxypteridine site.

Homotrimer.

It carries out the reaction 2 6,7-dimethyl-8-(1-D-ribityl)lumazine + H(+) = 5-amino-6-(D-ribitylamino)uracil + riboflavin. Its pathway is cofactor biosynthesis; riboflavin biosynthesis; riboflavin from 2-hydroxy-3-oxobutyl phosphate and 5-amino-6-(D-ribitylamino)uracil: step 2/2. Functionally, catalyzes the dismutation of two molecules of 6,7-dimethyl-8-ribityllumazine, resulting in the formation of riboflavin and 5-amino-6-(D-ribitylamino)uracil. In Mycobacterium bovis (strain ATCC BAA-935 / AF2122/97), this protein is Riboflavin synthase (ribE).